The primary structure comprises 371 residues: Protein NDRG2 (371 aa).

A disordered region spans residues 1–22 (MAELQEVQITEEKPLLPGQTPE). Ala2 is subject to N-acetylalanine. Thr20 bears the Phosphothreonine mark. A phosphoserine mark is found at Ser326 and Ser328. Thr330 is modified (phosphothreonine). Ser332 carries the phosphoserine modification. Position 334 is a phosphothreonine (Thr334). The interval 334–371 (TSAASIDGSRSRSRTLSQSSESGTLPSGPPGHTMEVSC) is disordered. A phosphoserine mark is found at Ser335, Ser338, and Ser344. Thr348 carries the post-translational modification Phosphothreonine. Phosphoserine occurs at positions 350, 352, 353, and 355. Thr357 is modified (phosphothreonine). Ser370 carries the phosphoserine modification.

It belongs to the NDRG family. In terms of tissue distribution, broadly expressed, with highest levels in heart, liver, skeletal muscle and aorta.

The protein localises to the cytoplasm. It is found in the perinuclear region. It localises to the cell projection. The protein resides in the growth cone. Its function is as follows. Contributes to the regulation of the Wnt signaling pathway. Down-regulates CTNNB1-mediated transcriptional activation of target genes, such as CCND1, and may thereby act as tumor suppressor. May be involved in dendritic cell and neuron differentiation. This is Protein NDRG2 (Ndrg2) from Rattus norvegicus (Rat).